The sequence spans 347 residues: Phosphate acyltransferase (347 aa).

The protein belongs to the PlsX family. Homodimer. Probably interacts with PlsY.

Its subcellular location is the cytoplasm. The enzyme catalyses a fatty acyl-[ACP] + phosphate = an acyl phosphate + holo-[ACP]. The protein operates within lipid metabolism; phospholipid metabolism. In terms of biological role, catalyzes the reversible formation of acyl-phosphate (acyl-PO(4)) from acyl-[acyl-carrier-protein] (acyl-ACP). This enzyme utilizes acyl-ACP as fatty acyl donor, but not acyl-CoA. In Lawsonia intracellularis (strain PHE/MN1-00), this protein is Phosphate acyltransferase.